The chain runs to 239 residues: Protein GrpE (239 aa).

2 disordered regions span residues methionine 1–lysine 53 and glycine 210–asparagine 239. Basic and acidic residues-rich tracts occupy residues asparagine 34 to lysine 53 and serine 219 to aspartate 230.

Belongs to the GrpE family. As to quaternary structure, homodimer.

The protein localises to the cytoplasm. Functionally, participates actively in the response to hyperosmotic and heat shock by preventing the aggregation of stress-denatured proteins, in association with DnaK and GrpE. It is the nucleotide exchange factor for DnaK and may function as a thermosensor. Unfolded proteins bind initially to DnaJ; upon interaction with the DnaJ-bound protein, DnaK hydrolyzes its bound ATP, resulting in the formation of a stable complex. GrpE releases ADP from DnaK; ATP binding to DnaK triggers the release of the substrate protein, thus completing the reaction cycle. Several rounds of ATP-dependent interactions between DnaJ, DnaK and GrpE are required for fully efficient folding. The sequence is that of Protein GrpE from Prochlorococcus marinus (strain MIT 9515).